The chain runs to 81 residues: Photosystem I iron-sulfur center (81 aa).

4Fe-4S ferredoxin-type domains lie at 2-31 (SHSV…MIPW) and 39-68 (IASA…VRVY). [4Fe-4S] cluster is bound by residues Cys11, Cys14, Cys17, Cys21, Cys48, Cys51, Cys54, and Cys58.

The eukaryotic PSI reaction center is composed of at least 11 subunits. [4Fe-4S] cluster is required as a cofactor.

It localises to the plastid thylakoid membrane. The catalysed reaction is reduced [plastocyanin] + hnu + oxidized [2Fe-2S]-[ferredoxin] = oxidized [plastocyanin] + reduced [2Fe-2S]-[ferredoxin]. Its function is as follows. Apoprotein for the two 4Fe-4S centers FA and FB of photosystem I (PSI); essential for photochemical activity. FB is the terminal electron acceptor of PSI, donating electrons to ferredoxin. The C-terminus interacts with PsaA/B/D and helps assemble the protein into the PSI complex. Required for binding of PsaD and PsaE to PSI. PSI is a plastocyanin-ferredoxin oxidoreductase, converting photonic excitation into a charge separation, which transfers an electron from the donor P700 chlorophyll pair to the spectroscopically characterized acceptors A0, A1, FX, FA and FB in turn. The polypeptide is Photosystem I iron-sulfur center (Cuscuta gronovii (Common dodder)).